The following is a 51-amino-acid chain: Putative protein LomR (51 aa).

It belongs to the outer membrane OOP (TC 1.B.6) superfamily. Ail family.

The protein is Putative protein LomR (lomR) of Escherichia coli (strain K12).